The following is a 26-amino-acid chain: Dermaseptin-J4 (26 aa).

Residue V26 is modified to Valine amide.

Expressed by the skin glands.

The protein resides in the secreted. Its function is as follows. Has antimicrobial activity. The chain is Dermaseptin-J4 from Phasmahyla jandaia (Jandaia leaf frog).